An 86-amino-acid polypeptide reads, in one-letter code: Neurotoxin 8-related gene product 1/2/3 (86 aa).

The first 19 residues, 1-19, serve as a signal peptide directing secretion; the sequence is MNYLTMISLALLVMTGVES. An LCN-type CS-alpha/beta domain is found at 22–84; sequence RDAYIADNKN…VPIKVPGKCN (63 aa). Disulfide bonds link Cys32–Cys83, Cys36–Cys56, Cys42–Cys66, and Cys46–Cys68. Asn84 carries the asparagine amide modification.

This sequence belongs to the long (4 C-C) scorpion toxin superfamily. Sodium channel inhibitor family. Alpha subfamily. As to expression, expressed by the venom gland.

Its subcellular location is the secreted. Its function is as follows. Binds voltage-dependently at site-3 of sodium channels (Nav) and inhibits the inactivation of the activated channels, thereby blocking neuronal transmission. This Androctonus mauritanicus mauritanicus (Scorpion) protein is Neurotoxin 8-related gene product 1/2/3 (NTVIIIrgp1).